Consider the following 196-residue polypeptide: Molybdenum cofactor guanylyltransferase (196 aa).

GTP-binding positions include Leu-10 to Gly-12, Lys-23, Asn-51, Asp-69, and Asp-99. Residue Asp-99 participates in Mg(2+) binding.

Belongs to the MobA family. In terms of assembly, monomer. Requires Mg(2+) as cofactor.

It localises to the cytoplasm. It carries out the reaction Mo-molybdopterin + GTP + H(+) = Mo-molybdopterin guanine dinucleotide + diphosphate. Its function is as follows. Transfers a GMP moiety from GTP to Mo-molybdopterin (Mo-MPT) cofactor (Moco or molybdenum cofactor) to form Mo-molybdopterin guanine dinucleotide (Mo-MGD) cofactor. The sequence is that of Molybdenum cofactor guanylyltransferase from Shewanella sp. (strain W3-18-1).